Here is a 473-residue protein sequence, read N- to C-terminus: Myocyte-specific enhancer factor 2C (473 aa).

The 55-residue stretch at 3 to 57 (RKKIQITRIMDERNRQVTFTKRKFGLMKKAYELSVLCDCEIALIIFNSTNKLFQY) folds into the MADS-box domain. Lys4 is modified (N6-acetyllysine). Residues 58 to 86 (ASTDMDKVLLKYTEYNEPHESRTNSDIVE) constitute a DNA-binding region (mef2-type). Position 59 is a phosphoserine; by CK2 (Ser59). A disordered region spans residues 91–116 (KGLNGCDSPDPDADDSVGHSPESEDK). Ser98, Ser106, and Ser110 each carry phosphoserine. Lys116 and Lys119 each carry N6-acetyllysine. Residues 180–224 (NSMSPGVTHRPPSAGNTGGLMGGDLTSGAGTSAGNGYGNPRNSPG) are disordered. Residues Ser222 and Ser228 each carry the phosphoserine modification. N6-acetyllysine occurs at positions 234 and 239. Residue Ser240 is modified to Phosphoserine. An N6-acetyllysine mark is found at Lys252 and Lys264. Positions 271–278 (SEDVDLLL) are beta domain. A phosphothreonine; by MAPK14 mark is found at Thr293 and Thr300. The segment at 368–399 (ACTSTHLSQSSNLSLPSTQSLNIKSEPVSPPR) is transcription repressor. A compositionally biased stretch (polar residues) spans 375 to 390 (SQSSNLSLPSTQSLNI). The interval 375 to 473 (SQSSNLSLPS…RMRLSEGWAT (99 aa)) is disordered. Lys391 participates in a covalent cross-link: Glycyl lysine isopeptide (Lys-Gly) (interchain with G-Cter in SUMO). Ser396 bears the Phosphoserine; by CDK5 mark. Ser419 bears the Phosphoserine; by MAPK7 mark. Residues 419–432 (SPVDSLSSCSSSYD) show a composition bias toward low complexity. Residues 433-443 (GSDREDHRNEF) are compositionally biased toward basic and acidic residues. Ser445 carries the post-translational modification Phosphoserine.

The protein belongs to the MEF2 family. As to quaternary structure, forms a complex with class II HDACs in undifferentiating cells. On myogenic differentiation, HDACs are released into the cytoplasm allowing MEF2s to interact with other proteins for activation. Interacts with EP300 in differentiating cells; the interaction acetylates MEF2C leading to increased DNA binding and activation. Interacts with HDAC7 and CARM1. Interacts with HDAC4 and HDAC9; the interaction with HDACs represses transcriptional activity. Interacts with LPIN1. Interacts with MYOCD. Interacts with AKAP13. Interacts with FOXK1; the interaction inhibits MEF2C transactivation activity. Interacts (via N-terminus) with HABP4; this interaction decreases DNA-binding activity of MEF2C in myocardial cells in response to mechanical stress. Interacts with JPH2; interaction specifically takes place with the Junctophilin-2 N-terminal fragment cleavage product of JPH2. Interacts (via MADS box) with SOX18. Interacts with PHF7; the interaction promotes MEF2C binding to its transcription targets. In terms of processing, phosphorylation on Ser-59 enhances DNA binding activity. Phosphorylation on Ser-396 is required for Lys-391 sumoylation and inhibits transcriptional activity. Post-translationally, acetylated by p300 on several sites in diffentiating myocytes. Acetylation on Lys-4 increases DNA binding and transactivation. Sumoylated on Lys-391 with SUMO2 but not by SUMO1 represses transcriptional activity. In terms of processing, proteolytically cleaved in cerebellar granule neurons, probably by caspase 7, following neurotoxicity. Preferentially cleaves the CDK5-mediated hyperphosphorylated form which leads to neuron apoptosis and transcriptional inactivation. In terms of tissue distribution, expressed in brain and skeletal muscle.

Its subcellular location is the nucleus. It is found in the cytoplasm. It localises to the sarcoplasm. Functionally, transcription activator which binds specifically to the MEF2 element present in the regulatory regions of many muscle-specific genes. Controls cardiac morphogenesis and myogenesis, and is also involved in vascular development. Enhances transcriptional activation mediated by SOX18. Plays an essential role in hippocampal-dependent learning and memory by suppressing the number of excitatory synapses and thus regulating basal and evoked synaptic transmission. Crucial for normal neuronal development, distribution, and electrical activity in the neocortex. Necessary for proper development of megakaryocytes and platelets and for bone marrow B-lymphopoiesis. Required for B-cell survival and proliferation in response to BCR stimulation, efficient IgG1 antibody responses to T-cell-dependent antigens and for normal induction of germinal center B-cells. May also be involved in neurogenesis and in the development of cortical architecture. Isoforms that lack the repressor domain are more active than isoform 1. The polypeptide is Myocyte-specific enhancer factor 2C (Homo sapiens (Human)).